The chain runs to 181 residues: 6,7-dimethyl-8-ribityllumazine synthase (181 aa).

5-amino-6-(D-ribitylamino)uracil contacts are provided by residues phenylalanine 23, 61-63 (SFE), and 85-87 (AVI). 90–91 (QT) is a binding site for (2S)-2-hydroxy-3-oxobutyl phosphate. Histidine 93 (proton donor) is an active-site residue. A 5-amino-6-(D-ribitylamino)uracil-binding site is contributed by phenylalanine 118. Arginine 132 is a binding site for (2S)-2-hydroxy-3-oxobutyl phosphate.

Belongs to the DMRL synthase family.

It carries out the reaction (2S)-2-hydroxy-3-oxobutyl phosphate + 5-amino-6-(D-ribitylamino)uracil = 6,7-dimethyl-8-(1-D-ribityl)lumazine + phosphate + 2 H2O + H(+). The protein operates within cofactor biosynthesis; riboflavin biosynthesis; riboflavin from 2-hydroxy-3-oxobutyl phosphate and 5-amino-6-(D-ribitylamino)uracil: step 1/2. Its function is as follows. Catalyzes the formation of 6,7-dimethyl-8-ribityllumazine by condensation of 5-amino-6-(D-ribitylamino)uracil with 3,4-dihydroxy-2-butanone 4-phosphate. This is the penultimate step in the biosynthesis of riboflavin. The chain is 6,7-dimethyl-8-ribityllumazine synthase from Synechococcus elongatus (strain ATCC 33912 / PCC 7942 / FACHB-805) (Anacystis nidulans R2).